We begin with the raw amino-acid sequence, 248 residues long: 3-deoxy-manno-octulosonate cytidylyltransferase (248 aa).

Belongs to the KdsB family.

It is found in the cytoplasm. It carries out the reaction 3-deoxy-alpha-D-manno-oct-2-ulosonate + CTP = CMP-3-deoxy-beta-D-manno-octulosonate + diphosphate. It functions in the pathway nucleotide-sugar biosynthesis; CMP-3-deoxy-D-manno-octulosonate biosynthesis; CMP-3-deoxy-D-manno-octulosonate from 3-deoxy-D-manno-octulosonate and CTP: step 1/1. Its pathway is bacterial outer membrane biogenesis; lipopolysaccharide biosynthesis. Functionally, activates KDO (a required 8-carbon sugar) for incorporation into bacterial lipopolysaccharide in Gram-negative bacteria. In Christiangramia forsetii (strain DSM 17595 / CGMCC 1.15422 / KT0803) (Gramella forsetii), this protein is 3-deoxy-manno-octulosonate cytidylyltransferase.